Consider the following 330-residue polypeptide: Beta-ketoacyl-[acyl-carrier-protein] synthase III (330 aa).

Catalysis depends on residues C111 and H249. An ACP-binding region spans residues 250-254 (QANTR). N279 is an active-site residue.

This sequence belongs to the thiolase-like superfamily. FabH family. In terms of assembly, homodimer.

Its subcellular location is the cytoplasm. The enzyme catalyses malonyl-[ACP] + acetyl-CoA + H(+) = 3-oxobutanoyl-[ACP] + CO2 + CoA. It participates in lipid metabolism; fatty acid biosynthesis. Functionally, catalyzes the condensation reaction of fatty acid synthesis by the addition to an acyl acceptor of two carbons from malonyl-ACP. Catalyzes the first condensation reaction which initiates fatty acid synthesis and may therefore play a role in governing the total rate of fatty acid production. Possesses both acetoacetyl-ACP synthase and acetyl transacylase activities. Its substrate specificity determines the biosynthesis of branched-chain and/or straight-chain of fatty acids. This Pseudomonas aeruginosa (strain LESB58) protein is Beta-ketoacyl-[acyl-carrier-protein] synthase III.